The sequence spans 206 residues: Uridine kinase (206 aa).

An ATP-binding site is contributed by 11-18 (GGSASGKT).

This sequence belongs to the uridine kinase family.

The protein localises to the cytoplasm. It carries out the reaction uridine + ATP = UMP + ADP + H(+). The catalysed reaction is cytidine + ATP = CMP + ADP + H(+). Its pathway is pyrimidine metabolism; CTP biosynthesis via salvage pathway; CTP from cytidine: step 1/3. It participates in pyrimidine metabolism; UMP biosynthesis via salvage pathway; UMP from uridine: step 1/1. The protein is Uridine kinase of Lactococcus lactis subsp. lactis (strain IL1403) (Streptococcus lactis).